The chain runs to 199 residues: Recombination protein RecR (199 aa).

Residues 57–72 (CQSCRTFTEETYCPIC) form a C4-type zinc finger. Residues 81–176 (SVICVVETPA…AVSRIAHGVP (96 aa)) enclose the Toprim domain.

The protein belongs to the RecR family.

Functionally, may play a role in DNA repair. It seems to be involved in an RecBC-independent recombinational process of DNA repair. It may act with RecF and RecO. The protein is Recombination protein RecR of Shewanella piezotolerans (strain WP3 / JCM 13877).